A 680-amino-acid polypeptide reads, in one-letter code: Harmonin-binding protein USHBP1 (680 aa).

A compositionally biased stretch (basic residues) spans 1 to 15 (MSARATRPRSRRGRH). 3 disordered regions span residues 1–101 (MSAR…GPAE), 135–162 (PVEAEDRDPGAPGSFGNEEEASGPGQQE), and 217–250 (ASPPPSMLRAGRRNSNSSSSGAERRPWAPQDSPM). Over residues 76-86 (PEERREPEVEA) the composition is skewed to basic and acidic residues. Coiled-coil stretches lie at residues 177–219 (LGTR…EASP), 362–386 (ATNGDLQAAEKEASRLLVKKEVAMD), and 479–506 (LADLVLRLQLAQREKRGLELREAALRAQ). The tract at residues 524-562 (LMGDGSSGGSSEDPSSEEEAGEDRQQHYQGPPALLGGQM) is disordered. Residues 573 to 661 (QELSASLTRA…QQAEELAVLT (89 aa)) are a coiled coil.

This sequence belongs to the MCC family. Interacts via its C-terminus with the first PDZ domain of USH1C.

In Rattus norvegicus (Rat), this protein is Harmonin-binding protein USHBP1.